The chain runs to 360 residues: Endolytic murein transglycosylase (360 aa).

A helical membrane pass occupies residues 16–36; the sequence is IILSSIVVLFLIIGGAFLYGK.

This sequence belongs to the transglycosylase MltG family.

Its subcellular location is the cell membrane. It carries out the reaction a peptidoglycan chain = a peptidoglycan chain with N-acetyl-1,6-anhydromuramyl-[peptide] at the reducing end + a peptidoglycan chain with N-acetylglucosamine at the non-reducing end.. In terms of biological role, functions as a peptidoglycan terminase that cleaves nascent peptidoglycan strands endolytically to terminate their elongation. The sequence is that of Endolytic murein transglycosylase from Bacillus subtilis (strain 168).